The following is a 508-amino-acid chain: CUGBP Elav-like family member 2 (508 aa).

2 necessary for RNA-binding, TNNT2 exon 5 and NMDA R1 exon 21 inclusion regions span residues 1-283 (MRCP…LQNL) and 357-508 (LAGM…SKPY). RRM domains follow at residues 40-123 (IKMF…PADS), 132-212 (RKLF…FADT), and 423-501 (ANLF…LKRS).

Belongs to the CELF/BRUNOL family. Interacts with A1CF. As to expression, expressed in tongue, spleen and brain (at protein level). Expressed in liver, thigh, stomach, lung and heart to very low levels (at protein level). Expressed in heart, brain, lung and muscle.

The protein resides in the nucleus. It is found in the cytoplasm. RNA-binding protein implicated in the regulation of several post-transcriptional events. Involved in pre-mRNA alternative splicing, mRNA translation and stability. Mediates exon inclusion and/or exclusion in pre-mRNA that are subject to tissue-specific and developmentally regulated alternative splicing. Specifically activates exon 5 inclusion of TNNT2 in embryonic, but not adult, skeletal muscle. Activates TNNT2 exon 5 inclusion by antagonizing the repressive effect of PTB. Acts both as an activator and as a repressor of a pair of coregulated exons: promotes inclusion of the smooth muscle (SM) exon but exclusion of the non-muscle (NM) exon in actinin pre-mRNAs. Promotes inclusion of exonS 21 and exclusion of exon 5 of the NMDA receptor R1 pre-mRNA. Involved in the apoB RNA editing activity. Increases COX2 mRNA stability and inhibits COX2 mRNA translation in epithelial cells after radiation injury. Modulates the cellular apoptosis program by regulating COX2-mediated prostaglandin E2 (PGE2) expression. Binds to (CUG)n triplet repeats in the 3'-UTR of transcripts such as DMPK. Binds to the muscle-specific splicing enhancer (MSE) intronic sites flanking the TNNT2 alternative exon 5. Binds preferentially to UG-rich sequences, in particular UG repeat and UGUU motifs. Binds to apoB mRNA, specifically to AU-rich sequences located immediately upstream of the edited cytidine. Binds AU-rich sequences in the 3'-UTR of COX2 mRNA. Binds to an intronic RNA element responsible for the silencing of exon 21 splicing. Binds to (CUG)n repeats. May be a specific regulator of miRNA biogenesis. Binds to primary microRNA pri-MIR140 and, with CELF1, negatively regulates the processing to mature miRNA. This is CUGBP Elav-like family member 2 (Celf2) from Mus musculus (Mouse).